The following is a 522-amino-acid chain: Sorting nexin-1 (522 aa).

Residues 1-142 (MASGGGGCSA…ELEEEEQEDQ (142 aa)) form a disordered region. A phosphoserine mark is found at S32 and S39. Residues 35–45 (EAGDSDTEGED) show a composition bias toward acidic residues. Phosphothreonine is present on residues T41 and T48. Positions 55–65 (KPQSPKKTTSL) are enriched in polar residues. Phosphoserine occurs at positions 58 and 72. Basic and acidic residues predominate over residues 71–80 (GSKENGIHEE). The segment covering 98 to 107 (LDSTQNNQKT) has biased composition (polar residues). Residues 132–142 (EELEEEEQEDQ) are compositionally biased toward acidic residues. In terms of domain architecture, PX spans 143-272 (FDLTVGITDP…EFLEKEELPR (130 aa)). Residues R186, S188, and K214 each coordinate a 1,2-diacyl-sn-glycero-3-phospho-(1D-myo-inositol-3-phosphate). S188 carries the phosphoserine modification. K237 is subject to N6-acetyllysine. An a 1,2-diacyl-sn-glycero-3-phospho-(1D-myo-inositol-3-phosphate)-binding site is contributed by R238. Residue S280 is modified to Phosphoserine. The tract at residues 281-298 (GAGLLKMFNKATDAVSKM) is membrane-binding amphipathic helix. A BAR domain is found at 302–522 (MNESDIWFEE…AFLPEARAIS (221 aa)).

This sequence belongs to the sorting nexin family. As to quaternary structure, predominantly forms heterodimers with BAR domain-containing sorting nexins SNX5, SNX6 and SNX32; can self-associate to form homodimers. The heterodimers are proposed to self-assemble into helical arrays on the membrane to stabilize and expand local membrane curvature underlying endosomal tubule formation. Thought to be a component of the originally described retromer complex (also called SNX-BAR retromer) which is a pentamer containing the heterotrimeric retromer cargo-selective complex (CSC), also described as vacuolar protein sorting subcomplex (VPS) and a heterodimeric membrane-deforming subcomplex formed between SNX1 or SNX2 and SNX5 or SNX6 (also called SNX-BAR subcomplex); the respective CSC and SNX-BAR subcomplexes associate with low affinity. Interacts with SNX5, SNX6, SNX32, VPS26A, VPS29, VPS35, DRD5, DENND5A, KALRN, RHOG (GDP-bound form). The interaction with SNX2 is reported controversially. Interacts with DNAJC13; prevented by presence of HGS. Interacts with HGS.

Its subcellular location is the endosome membrane. It is found in the golgi apparatus. The protein localises to the trans-Golgi network membrane. It localises to the early endosome membrane. The protein resides in the cell projection. Its subcellular location is the lamellipodium. Functionally, involved in several stages of intracellular trafficking. Interacts with membranes containing phosphatidylinositol 3-phosphate (PtdIns(3P)) or phosphatidylinositol 3,5-bisphosphate (PtdIns(3,5)P2). Acts in part as component of the retromer membrane-deforming SNX-BAR subcomplex. The SNX-BAR retromer mediates retrograde transport of cargo proteins from endosomes to the trans-Golgi network (TGN) and is involved in endosome-to-plasma membrane transport for cargo protein recycling. The SNX-BAR subcomplex functions to deform the donor membrane into a tubular profile called endosome-to-TGN transport carrier (ETC). Can sense membrane curvature and has in vitro vesicle-to-membrane remodeling activity. Involved in retrograde endosome-to-TGN transport of lysosomal enzyme receptors (IGF2R, M6PR and SORT1). Plays a role in targeting ligand-activated EGFR to the lysosomes for degradation after endocytosis from the cell surface and release from the Golgi. Involvement in retromer-independent endocytic trafficking of P2RY1 and lysosomal degradation of protease-activated receptor-1/F2R. Promotes KALRN- and RHOG-dependent but retromer-independent membrane remodeling such as lamellipodium formation; the function is dependent on GEF activity of KALRN. Required for endocytosis of DRD5 upon agonist stimulation but not for basal receptor trafficking. In Rattus norvegicus (Rat), this protein is Sorting nexin-1 (Snx1).